Consider the following 584-residue polypeptide: Segmentation polarity homeobox protein engrailed (584 aa).

Disordered regions lie at residues 1-27 (MALE…PQQH), 141-198 (EESD…SKPS), 343-380 (IGQA…SSST), 392-451 (CSSA…GGKN), and 465-492 (DRPS…PRTA). Residues 12 to 23 (APSPPGCLPHSP) are compositionally biased toward pro residues. A compositionally biased stretch (acidic residues) spans 160–174 (TEEDEEEDDDIDVDD). The span at 189 to 198 (HQQSKQSKPS) shows a compositional bias: polar residues. 2 stretches are compositionally biased toward low complexity: residues 348-380 (STTP…SSST) and 392-405 (CSSA…SPSS). Positions 478-489 (QPKDKTNDEKRP) are enriched in basic and acidic residues. A DNA-binding region (homeobox) is located at residues 486-545 (EKRPRTAFSSEQLARLKREFNENRYLTERRRQQLSSELGLNEAQIKIWFQNKRAKIKKST).

This sequence belongs to the engrailed homeobox family.

Its subcellular location is the nucleus. In terms of biological role, this protein specifies the body segmentation pattern. It is required for the development of the central nervous system. Transcriptional regulator that repress activated promoters. The chain is Segmentation polarity homeobox protein engrailed (en) from Drosophila virilis (Fruit fly).